We begin with the raw amino-acid sequence, 74 residues long: M-myrmeciitoxin-Mb1a (74 aa).

The signal sequence occupies residues 1–26 (MKLSCLLLTLAIIVVLTIVHAPNVEA). Residues 27 to 50 (KALADPESDAVGFADAVGEADPNA) constitute a propeptide that is removed on maturation. Glutamine amide is present on glutamine 73.

It belongs to the formicidae venom precursor-01 superfamily. Ant pilosulin family. Expressed by the venom gland.

The protein resides in the secreted. Its function is as follows. Shows moderate activity against E.coli and S.aureus (MIC&lt;25 uM), slight activity against B.subtilis (MIC&lt;50 uM), and no activity against L.garvieae, P.aeruginosa, C.albicans, and S.cerevisiae. Has no hemolytic nor cytolytic activity. Causes an IgE-independent histamine release. In Myrmecia banksi (Jack jumper ant), this protein is M-myrmeciitoxin-Mb1a.